The sequence spans 222 residues: Peptide methionine sulfoxide reductase MsrA (222 aa).

Cysteine 54 is a catalytic residue.

Belongs to the MsrA Met sulfoxide reductase family.

It carries out the reaction L-methionyl-[protein] + [thioredoxin]-disulfide + H2O = L-methionyl-(S)-S-oxide-[protein] + [thioredoxin]-dithiol. The catalysed reaction is [thioredoxin]-disulfide + L-methionine + H2O = L-methionine (S)-S-oxide + [thioredoxin]-dithiol. Functionally, has an important function as a repair enzyme for proteins that have been inactivated by oxidation. Catalyzes the reversible oxidation-reduction of methionine sulfoxide in proteins to methionine. The protein is Peptide methionine sulfoxide reductase MsrA of Methylococcus capsulatus (strain ATCC 33009 / NCIMB 11132 / Bath).